Here is a 120-residue protein sequence, read N- to C-terminus: Large ribosomal subunit protein uL18 (120 aa).

This sequence belongs to the universal ribosomal protein uL18 family. In terms of assembly, part of the 50S ribosomal subunit; part of the 5S rRNA/L5/L18/L25 subcomplex. Contacts the 5S and 23S rRNAs.

Functionally, this is one of the proteins that bind and probably mediate the attachment of the 5S RNA into the large ribosomal subunit, where it forms part of the central protuberance. The chain is Large ribosomal subunit protein uL18 from Rhizobium rhizogenes (strain K84 / ATCC BAA-868) (Agrobacterium radiobacter).